Here is a 441-residue protein sequence, read N- to C-terminus: Amino-acid acetyltransferase (441 aa).

Positions Glu295 to Ser434 constitute an N-acetyltransferase domain.

It belongs to the acetyltransferase family. ArgA subfamily.

It is found in the cytoplasm. It catalyses the reaction L-glutamate + acetyl-CoA = N-acetyl-L-glutamate + CoA + H(+). It functions in the pathway amino-acid biosynthesis; L-arginine biosynthesis; N(2)-acetyl-L-ornithine from L-glutamate: step 1/4. This is Amino-acid acetyltransferase from Photobacterium profundum (strain SS9).